We begin with the raw amino-acid sequence, 91 residues long: MSDFNIVGVIKVMPSDPEVNLDELEEKLKAVIPEKYGLAKVEREPIAFGLVALKFYVLGKDEEGYSFDEVAEKFKEVENVESAEVETVSRI.

It belongs to the EF-1-beta/EF-1-delta family.

Its function is as follows. Promotes the exchange of GDP for GTP in EF-1-alpha/GDP, thus allowing the regeneration of EF-1-alpha/GTP that could then be used to form the ternary complex EF-1-alpha/GTP/AAtRNA. This is Elongation factor 1-beta (ef1b) from Pyrococcus abyssi (strain GE5 / Orsay).